We begin with the raw amino-acid sequence, 364 residues long: 3-isopropylmalate dehydrogenase (364 aa).

78–91 (GKKWDYLSIDKRPE) serves as a coordination point for NAD(+). Substrate-binding residues include R99, R109, R138, and D227. Residues D227, D251, and D255 each contribute to the Mg(2+) site. 285–297 (GSAPDIAGKNIAN) lines the NAD(+) pocket.

It belongs to the isocitrate and isopropylmalate dehydrogenases family. LeuB type 1 subfamily. As to quaternary structure, homodimer. Mg(2+) serves as cofactor. Mn(2+) is required as a cofactor.

The protein localises to the cytoplasm. The catalysed reaction is (2R,3S)-3-isopropylmalate + NAD(+) = 4-methyl-2-oxopentanoate + CO2 + NADH. It functions in the pathway amino-acid biosynthesis; L-leucine biosynthesis; L-leucine from 3-methyl-2-oxobutanoate: step 3/4. Functionally, catalyzes the oxidation of 3-carboxy-2-hydroxy-4-methylpentanoate (3-isopropylmalate) to 3-carboxy-4-methyl-2-oxopentanoate. The product decarboxylates to 4-methyl-2 oxopentanoate. This chain is 3-isopropylmalate dehydrogenase, found in Buchnera aphidicola subsp. Uroleucon erigeronensis.